We begin with the raw amino-acid sequence, 472 residues long: 3-isopropylmalate dehydratase large subunit (472 aa).

[4Fe-4S] cluster contacts are provided by C353, C414, and C417.

This sequence belongs to the aconitase/IPM isomerase family. LeuC type 1 subfamily. Heterodimer of LeuC and LeuD. [4Fe-4S] cluster serves as cofactor.

The enzyme catalyses (2R,3S)-3-isopropylmalate = (2S)-2-isopropylmalate. It functions in the pathway amino-acid biosynthesis; L-leucine biosynthesis; L-leucine from 3-methyl-2-oxobutanoate: step 2/4. In terms of biological role, catalyzes the isomerization between 2-isopropylmalate and 3-isopropylmalate, via the formation of 2-isopropylmaleate. The polypeptide is 3-isopropylmalate dehydratase large subunit (Acinetobacter baumannii (strain ATCC 17978 / DSM 105126 / CIP 53.77 / LMG 1025 / NCDC KC755 / 5377)).